A 273-amino-acid polypeptide reads, in one-letter code: Phosphate import ATP-binding protein PstB (273 aa).

Positions 17 to 259 (LSAENLSIFY…DKTNNIFQNP (243 aa)) constitute an ABC transporter domain. An ATP-binding site is contributed by 49 to 56 (GPSGCGKS).

It belongs to the ABC transporter superfamily. Phosphate importer (TC 3.A.1.7) family. The complex is composed of two ATP-binding proteins (PstB), two transmembrane proteins (PstC and PstA) and a solute-binding protein (PstS).

Its subcellular location is the cell inner membrane. It carries out the reaction phosphate(out) + ATP + H2O = ADP + 2 phosphate(in) + H(+). In terms of biological role, part of the ABC transporter complex PstSACB involved in phosphate import. Responsible for energy coupling to the transport system. The protein is Phosphate import ATP-binding protein PstB of Trichodesmium erythraeum (strain IMS101).